We begin with the raw amino-acid sequence, 320 residues long: MSVGFIGAGQLAYALARGFTAAGILSAHKIIASSPEMNLPTVSALRKMGVNLTRSNKETVKHSDVLFLAVKPHIIPFILDEIGADVQARHIVVSCAAGVTISSVEKKLMAFQPAPKVIRCMTNTPVVVQEGATVYATGTHALVEDGQLLEQLMSSVGFCTEVEEDLIDAVTGLSGSGPAYAFMALDALADGGVKMGLPRRLAIQLGAQALLGAAKMLLDSEQHPCQLKDNVCSPGGATIHALHFLESGGFRSLLINAVEASCIRTRELQSMADQEKISPAALKKTLLDRVKLESPTVSTLTPSSPGKLLTRSLALGGKKD.

At Ser-2 the chain carries N-acetylserine. Residues 6-11 and Ser-34 contribute to the NADP(+) site; that span reads IGAGQL. Residues Ala-8, Gln-10, Leu-11, Ser-34, Glu-36, Asn-56, Val-70, Lys-71, and Ala-97 each coordinate NADPH. Residues Asn-56, 69–72, and 95–97 contribute to the NADP(+) site; these read AVKP and CAA. L-proline is bound at residue Glu-164. Asn-230 is an NADPH binding site. Residues Ala-237 and Thr-238 each contribute to the L-proline site. A compositionally biased stretch (low complexity) spans 295–305; the sequence is PTVSTLTPSSP. The interval 295-320 is disordered; sequence PTVSTLTPSSPGKLLTRSLALGGKKD. A Phosphoserine modification is found at Ser-304.

It belongs to the pyrroline-5-carboxylate reductase family. In terms of assembly, homodecamer; composed of 5 homodimers. Interacts with LTO1. Detected in erythrocytes (at protein level). Expressed in fetal brain.

Its subcellular location is the cytoplasm. The protein resides in the mitochondrion. The enzyme catalyses L-proline + NADP(+) = (S)-1-pyrroline-5-carboxylate + NADPH + 2 H(+). The catalysed reaction is L-proline + NAD(+) = (S)-1-pyrroline-5-carboxylate + NADH + 2 H(+). It participates in amino-acid biosynthesis; L-proline biosynthesis; L-proline from L-glutamate 5-semialdehyde: step 1/1. With respect to regulation, subject to competitive inhibition by NADP. Was reported not to be inhibited by proline. However other study demonstrated an inhibition by proline. Functionally, oxidoreductase that catalyzes the last step in proline biosynthesis, which corresponds to the reduction of pyrroline-5-carboxylate to L-proline using NAD(P)H. At physiologic concentrations, has higher specific activity in the presence of NADH. Involved in cellular response to oxidative stress. In some cell types, such as erythrocytes, its primary function may be the generation of NADP(+). In Homo sapiens (Human), this protein is Pyrroline-5-carboxylate reductase 2.